The primary structure comprises 181 residues: ATP synthase subunit delta (181 aa).

This sequence belongs to the ATPase delta chain family. In terms of assembly, F-type ATPases have 2 components, F(1) - the catalytic core - and F(0) - the membrane proton channel. F(1) has five subunits: alpha(3), beta(3), gamma(1), delta(1), epsilon(1). F(0) has three main subunits: a(1), b(2) and c(10-14). The alpha and beta chains form an alternating ring which encloses part of the gamma chain. F(1) is attached to F(0) by a central stalk formed by the gamma and epsilon chains, while a peripheral stalk is formed by the delta and b chains.

It is found in the cell membrane. Its function is as follows. F(1)F(0) ATP synthase produces ATP from ADP in the presence of a proton or sodium gradient. F-type ATPases consist of two structural domains, F(1) containing the extramembraneous catalytic core and F(0) containing the membrane proton channel, linked together by a central stalk and a peripheral stalk. During catalysis, ATP synthesis in the catalytic domain of F(1) is coupled via a rotary mechanism of the central stalk subunits to proton translocation. This protein is part of the stalk that links CF(0) to CF(1). It either transmits conformational changes from CF(0) to CF(1) or is implicated in proton conduction. The chain is ATP synthase subunit delta from Priestia megaterium (strain ATCC 12872 / QMB1551) (Bacillus megaterium).